The following is a 219-amino-acid chain: GTP-binding protein Rab-3D (219 aa).

Residue Ala-2 is modified to N-acetylalanine. Position 29-37 (29-37 (GNSSVGKTS)) interacts with GDP. GTP contacts are provided by Ser-31, Ser-32, Val-33, Gly-34, Lys-35, Thr-36, Ser-37, Pro-49, and Ser-53. Position 36 (Thr-36) interacts with Mg(2+). The Switch 1 signature appears at 49–58 (PAFVSTVGID). Mg(2+) is bound by residues Thr-54 and Asp-77. Gly-80 provides a ligand contact to GTP. The short motif at 80-96 (GQERYRTITTAYYRGAM) is the Switch 2 element. Thr-86 is modified (phosphothreonine). GTP-binding residues include Asn-135, Lys-136, Asp-138, Ala-166, and Lys-167. GDP contacts are provided by residues 135-138 (NKCD) and 165-167 (SAK). Position 190 is a phosphoserine (Ser-190). Residues 190–219 (SLEPSSSPGSNGKGPALGDTPPPQPSSCGC) form a disordered region. Residues 193-203 (PSSSPGSNGKG) are compositionally biased toward low complexity. Pro residues predominate over residues 209–219 (TPPPQPSSCGC). 2 S-geranylgeranyl cysteine lipidation sites follow: Cys-217 and Cys-219. A Cysteine methyl ester; partial modification is found at Cys-219.

This sequence belongs to the small GTPase superfamily. Rab family. Interacts with RIMS1, RIMS2, RPH3A and RPH3AL. Interacts with RAB3IP. The GTP-bound form interacts with REP15. Interacts with CHM; phosphorylation at Thr-86 disrupts this interaction. Interacts with MADD (via uDENN domain); the GTP-bound form is preferred for interaction. Mg(2+) is required as a cofactor. In terms of processing, in fetal glands the majority of the proteins are methylated, whereas in neonatal and adult glands, only 50% are methylated. Post-translationally, phosphorylation of Thr-86 in the switch II region by LRRK2 prevents the association of RAB regulatory proteins, including CHM. As to expression, highest levels found in lung.

Its subcellular location is the cell membrane. It catalyses the reaction GTP + H2O = GDP + phosphate + H(+). Its activity is regulated as follows. Regulated by guanine nucleotide exchange factors (GEFs) which promote the exchange of bound GDP for free GTP. Regulated by GTPase activating proteins (GAPs) which increase the GTP hydrolysis activity. Inhibited by GDP dissociation inhibitors (GDIs) which prevent Rab-GDP dissociation. Functionally, the small GTPases Rab are key regulators of intracellular membrane trafficking, from the formation of transport vesicles to their fusion with membranes. Rabs cycle between an inactive GDP-bound form and an active GTP-bound form that is able to recruit to membranes different sets of downstream effectors directly responsible for vesicle formation, movement, tethering and fusion. RAB3D may be involved in the insulin-induced exocytosis of GLUT4-containing vesicles in adipocytes. This is GTP-binding protein Rab-3D from Rattus norvegicus (Rat).